A 327-amino-acid chain; its full sequence is MSLTSDIKQELAQVHVAKNSVRAAEVSAILRFAGEMQAVGGKLVIEANLDSMQVGMRLQEFIQGLYNSRVDVHTVNPTVSRKTPRYLVRIIDNADEIARRTGLVTRSGHVVKGLAPSVVSGTISDAEAAWRGAFLANGSLSDPGRSSSLEVLCPGQESALALVGCARRIGIAAKTKDSRGFDRVNVRDAEAIGALLTRMGAQKTRIMWEEKRLKRESRTPANRLANFDDANLRRSARAAVAAAARVERAMKILGDDVPEHLAEAGQLRVQHRQASLEELGRLADPQMTKDAVAGRIRRLLTMADKRAEDLKIPDTNSVVTEDLLEEI.

The segment at residues 275 to 308 (SLEELGRLADPQMTKDAVAGRIRRLLTMADKRAE) is a DNA-binding region (H-T-H motif).

It belongs to the WhiA family.

In terms of biological role, involved in cell division and chromosome segregation. The sequence is that of Probable cell division protein WhiA from Corynebacterium glutamicum (strain R).